We begin with the raw amino-acid sequence, 55 residues long: Mitochondrial import receptor subunit TOM7 homolog (55 aa).

The Cytoplasmic segment spans residues 1–20 (MVKLSKEAKQRLQQLFKGGQ). A helical membrane pass occupies residues 21–40 (FAIRWGFIPLVIYLGFTRGA). Over 41–55 (DPGMPEPSVLSLLWG) the chain is Mitochondrial intermembrane.

It belongs to the Tom7 family. As to quaternary structure, forms part of the preprotein translocase complex of the outer mitochondrial membrane (TOM complex) which consists of at least 7 different proteins (TOMM5, TOMM6, TOMM7, TOMM20, TOMM22, TOMM40 and TOMM70).

Its subcellular location is the mitochondrion outer membrane. Its function is as follows. Required for assembly and stability of the TOM complex. Positive regulator of PRKN translocation to damaged mitochondria. Acts probably by stabilizing PINK1 on the outer membrane of depolarized mitochondria. This chain is Mitochondrial import receptor subunit TOM7 homolog (Tomm7), found in Mus musculus (Mouse).